Here is a 485-residue protein sequence, read N- to C-terminus: Glutamyl-tRNA(Gln) amidotransferase subunit A (485 aa).

Catalysis depends on charge relay system residues Lys-79 and Ser-154. The active-site Acyl-ester intermediate is the Ser-178.

This sequence belongs to the amidase family. GatA subfamily. Heterotrimer of A, B and C subunits.

The catalysed reaction is L-glutamyl-tRNA(Gln) + L-glutamine + ATP + H2O = L-glutaminyl-tRNA(Gln) + L-glutamate + ADP + phosphate + H(+). Allows the formation of correctly charged Gln-tRNA(Gln) through the transamidation of misacylated Glu-tRNA(Gln) in organisms which lack glutaminyl-tRNA synthetase. The reaction takes place in the presence of glutamine and ATP through an activated gamma-phospho-Glu-tRNA(Gln). This chain is Glutamyl-tRNA(Gln) amidotransferase subunit A, found in Clostridium novyi (strain NT).